Reading from the N-terminus, the 167-residue chain is MPQQKMRIHGQYVKDLSFENPNSPFLSSSKAPDINVMVNINSAKLEGTKNKEEVNEEKSFHEITLHIEVKATVKDEGIKDGVAFICETKYCGIFSIENLKELSEEEVRQALFIGGPTFLFPFAREIIARVTSSGGFPPLMLDPIDFETMYEQQGQQQKSNGSNSNFN.

Belongs to the SecB family. Homotetramer, a dimer of dimers. One homotetramer interacts with 1 SecA dimer.

The protein localises to the cytoplasm. Functionally, one of the proteins required for the normal export of preproteins out of the cell cytoplasm. It is a molecular chaperone that binds to a subset of precursor proteins, maintaining them in a translocation-competent state. It also specifically binds to its receptor SecA. This chain is Protein-export protein SecB, found in Wolbachia pipientis wMel.